Consider the following 136-residue polypeptide: Plastocyanin (136 aa).

An N-terminal signal peptide occupies residues 1 to 34 (MSLVFNLVKRLQLILLSLVVGGLAVAFLSNPAAA). Residues 35-136 (ETYIVKMGSD…GMVGKIIVNG (102 aa)) form the Plastocyanin-like domain. The Cu cation site is built by His73, Cys120, His123, and Met128.

This sequence belongs to the plastocyanin family. It depends on Cu(2+) as a cofactor.

Its subcellular location is the cellular thylakoid membrane. In terms of biological role, participates in electron transfer between P700 and the cytochrome b6-f complex in photosystem I. This Synechococcus sp. (strain JA-2-3B'a(2-13)) (Cyanobacteria bacterium Yellowstone B-Prime) protein is Plastocyanin.